Consider the following 275-residue polypeptide: Transcription regulator AOL_s00215g275 (275 aa).

Disordered stretches follow at residues 13 to 65 (TPLP…SSIG) and 84 to 108 (ILQQKSRHQNQPSRRHKQKNRRQRL). The span at 14–26 (PLPSLNSSRSPQR) shows a compositional bias: polar residues. The span at 27-40 (TPSLGSSSTSSLSP) shows a compositional bias: low complexity. A compositionally biased stretch (polar residues) spans 47-60 (TPSTPESNDSGLTL). A compositionally biased stretch (basic residues) spans 88–106 (KSRHQNQPSRRHKQKNRRQ).

Its function is as follows. Regulatory protein; part of the gene cluster that mediates the biosynthesis of sesquiterpenyl epoxy-cyclohexenoids (SECs) such as anthrobotrisins and arthrosporols, metabolites that possess a novel hybrid carbon skeleton consisting of a polyketide-derived epoxycyclohexenol combined with a terpenoid-derived monocyclic sesquiterpenol substructure (PKS-PTS hybrid). The SEC pathway plays an important role for fungal soil colonization via decreasing fungal nematode-capturing ability. AOL_s00215g275 can perform multiple functions in fungal growth and development via regulating the SEC biosynthesis, TCA cycle, and septa formation. Also involved in inhibiting conidial formation, germination, and nematicidal activity but promotes trap production. Plays a role in fungal resistances and significantly regulates the fungal morphology and responses to chemical stressors such as cell-wall-perturbing agents (SDS and Congo red), osmotic agents (NaCl and sorbitol), or the oxidant H(2)O(2). This chain is Transcription regulator AOL_s00215g275, found in Arthrobotrys oligospora (strain ATCC 24927 / CBS 115.81 / DSM 1491) (Nematode-trapping fungus).